Consider the following 324-residue polypeptide: Beta-ketoacyl-[acyl-carrier-protein] synthase III (324 aa).

Active-site residues include Cys-111 and His-251. The interval 252–256 (QANTR) is ACP-binding. Asn-281 is a catalytic residue.

The protein belongs to the thiolase-like superfamily. FabH family. As to quaternary structure, homodimer.

It localises to the plastid. It is found in the chloroplast. It carries out the reaction malonyl-[ACP] + acetyl-CoA + H(+) = 3-oxobutanoyl-[ACP] + CO2 + CoA. It functions in the pathway lipid metabolism; fatty acid biosynthesis. Its function is as follows. Catalyzes the condensation reaction of fatty acid synthesis by the addition to an acyl acceptor of two carbons from malonyl-ACP. Catalyzes the first condensation reaction which initiates fatty acid synthesis and may therefore play a role in governing the total rate of fatty acid production. Possesses both acetoacetyl-ACP synthase and acetyl transacylase activities. Its substrate specificity determines the biosynthesis of branched-chain and/or straight-chain of fatty acids. In Pyropia yezoensis (Susabi-nori), this protein is Beta-ketoacyl-[acyl-carrier-protein] synthase III.